A 396-amino-acid chain; its full sequence is 8-amino-7-oxononanoate synthase (396 aa).

Arg21 serves as a coordination point for substrate. 112–113 is a pyridoxal 5'-phosphate binding site; it reads GY. A substrate-binding site is contributed by His137. Pyridoxal 5'-phosphate contacts are provided by Ser183, His211, and Thr239. At Lys242 the chain carries N6-(pyridoxal phosphate)lysine. A substrate-binding site is contributed by Thr358.

Belongs to the class-II pyridoxal-phosphate-dependent aminotransferase family. BioF subfamily. As to quaternary structure, homodimer. Pyridoxal 5'-phosphate serves as cofactor.

The enzyme catalyses 6-carboxyhexanoyl-[ACP] + L-alanine + H(+) = (8S)-8-amino-7-oxononanoate + holo-[ACP] + CO2. It functions in the pathway cofactor biosynthesis; biotin biosynthesis. Catalyzes the decarboxylative condensation of pimeloyl-[acyl-carrier protein] and L-alanine to produce 8-amino-7-oxononanoate (AON), [acyl-carrier protein], and carbon dioxide. This is 8-amino-7-oxononanoate synthase from Bordetella petrii (strain ATCC BAA-461 / DSM 12804 / CCUG 43448).